The chain runs to 432 residues: Septin-14 (432 aa).

One can recognise a Septin-type G domain in the interval 49 to 315; it reads QGFTFNILCV…ECYRYQKLQK (267 aa). The interval 59 to 66 is G1 motif; it reads GETGIGKS. GTP-binding positions include 59–66, glycine 114, 195–203, glycine 249, and arginine 264; these read GETGIGKS and KADTISKND. A G3 motif region spans residues 111–114; it reads ETVG. Residues 194 to 197 are G4 motif; it reads AKAD. Residues 332–412 are a coiled coil; sequence EIFEAKRQEF…IIDFYKMKAA (81 aa). The interval 369–432 is required for interaction with SEPTIN4. Required for migration of cortical neurons during corticogenesis; the sequence is EAEKELQDKF…DTKKDKHRKK (64 aa).

This sequence belongs to the TRAFAC class TrmE-Era-EngA-EngB-Septin-like GTPase superfamily. Septin GTPase family. In terms of assembly, septins polymerize into heterooligomeric protein complexes that form filaments, and can associate with cellular membranes, actin filaments and microtubules. GTPase activity is required for filament formation. Interacts with ACTN4. Interacts with SEPTIN9. Interacts (via C-terminus) with SEPTIN4. Testis-specific (at protein level).

The protein localises to the cytoplasm. The protein resides in the cytoskeleton. Its subcellular location is the cell projection. It is found in the axon. It localises to the dendrite. The protein localises to the perikaryon. The protein resides in the perinuclear region. Its subcellular location is the cytoplasmic vesicle. It is found in the secretory vesicle. It localises to the acrosome. Its function is as follows. Filament-forming cytoskeletal GTPase. Involved in the migration of cortical neurons and the formation of neuron leading processes during embryonic development. Plays a role in sperm head formation during spermiogenesis, potentially via facilitating localization of ACTN4 to cell filaments. This Homo sapiens (Human) protein is Septin-14.